Consider the following 197-residue polypeptide: TATA-box-binding protein (197 aa).

2 repeat units span residues Ile10–Leu86 and Ile101–Leu177.

Belongs to the TBP family.

Its function is as follows. General factor that plays a role in the activation of archaeal genes transcribed by RNA polymerase. Binds specifically to the TATA box promoter element which lies close to the position of transcription initiation. This chain is TATA-box-binding protein, found in Pyrobaculum neutrophilum (strain DSM 2338 / JCM 9278 / NBRC 100436 / V24Sta) (Thermoproteus neutrophilus).